Consider the following 545-residue polypeptide: G-protein coupled receptor 161 (545 aa).

Residues M1–E46 lie on the Extracellular side of the membrane. Residues N21 and N32 are each glycosylated (N-linked (GlcNAc...) asparagine). The chain crosses the membrane as a helical span at residues F47–T67. Residues L68–K80 are Cytoplasmic-facing. A helical membrane pass occupies residues F81–V101. Topologically, residues T102–N117 are extracellular. Cysteines 116 and 194 form a disulfide. A glycan (N-linked (GlcNAc...) asparagine) is linked at N117. Residues F118–I139 traverse the membrane as a helical segment. The Cytoplasmic segment spans residues D140–R159. Residues A160 to F180 traverse the membrane as a helical segment. The Extracellular portion of the chain corresponds to G181 to T205. A helical membrane pass occupies residues I206–F226. Residues I227–L285 are Cytoplasmic-facing. Residues I286–I306 form a helical membrane-spanning segment. Residues T307–E322 lie on the Extracellular side of the membrane. A helical transmembrane segment spans residues T323–W343. Over N344–R545 the chain is Cytoplasmic.

This sequence belongs to the G-protein coupled receptor 1 family.

The protein localises to the cell projection. It localises to the cilium membrane. The protein resides in the cell membrane. In terms of biological role, key negative regulator of Shh signaling, which promotes the processing of GLI3 into GLI3R during neural tube development. Recruited by TULP3 and the IFT-A complex to primary cilia and acts as a regulator of the PKA-dependent basal repression machinery in Shh signaling by increasing cAMP levels, leading to promote the PKA-dependent processing of GLI3 into GLI3R and repress the Shh signaling. In presence of SHH, it is removed from primary cilia and is internalized into recycling endosomes, preventing its activity and allowing activation of the Shh signaling. Its ligand is unknown. This Mus musculus (Mouse) protein is G-protein coupled receptor 161 (Gpr161).